The primary structure comprises 233 residues: Lysoplasmalogenase TMEM86B (233 aa).

Topologically, residues 1 to 30 (MPCCDPYPWIGLNVGRLSSFPLLKYPQVRR) are cytoplasmic. The helical transmembrane segment at 31-47 (WLAPFIVACSLYFLLWI) threads the bilayer. The Extracellular portion of the chain corresponds to 48–53 (PEDQPS). The helical transmembrane segment at 54 to 75 (WVSALVKCQPILCLVLFLWAVA) threads the bilayer. Over 76–81 (PGGSYT) the chain is Cytoplasmic. The helical transmembrane segment at 82–100 (WLLQGALTCSAVGDACLIW) threads the bilayer. Over 101 to 106 (PEAFFY) the chain is Extracellular. A helical membrane pass occupies residues 107–124 (GMAVFSVAHLLYLWAFGL). Residues 125–130 (SPLQPG) are Cytoplasmic-facing. The helical transmembrane segment at 131 to 147 (LLLCTTLASLTYYSFLL) threads the bilayer. The Extracellular portion of the chain corresponds to 148-153 (LHLEPN). A helical transmembrane segment spans residues 154-170 (MVLPVAAYGLILNTMLW). At 171-178 (RGLVLGRS) the chain is on the cytoplasmic side. Residues 179–195 (AGWGAVLFIFSDGVLAW) traverse the membrane as a helical segment. Residues 196 to 206 (DTFVYTLPFAR) lie on the Extracellular side of the membrane. A helical membrane pass occupies residues 207–225 (LVTMSTYYAAQLLLTLSAL). Residues 226–233 (RSPGLKTH) lie on the Cytoplasmic side of the membrane.

This sequence belongs to the TMEM86 family. Homodimer.

It localises to the endoplasmic reticulum membrane. The protein localises to the cytoplasm. The enzyme catalyses a 1-O-(1Z-alkenyl)-sn-glycero-3-phosphocholine + H2O = a 2,3-saturated aldehyde + sn-glycerol 3-phosphocholine. It catalyses the reaction a 1-O-(1Z-alkenyl)-sn-glycero-3-phosphoethanolamine + H2O = a 2,3-saturated aldehyde + sn-glycero-3-phosphoethanolamine. Competitively inhibited by lysophosphatidic acid. Catalyzes the hydrolysis of the vinyl ether bond of choline or ethanolamine lysoplasmalogens, forming fatty aldehyde and glycerophosphocholine or glycerophosphoethanolamine, respectively and is specific for the sn-2-deacylated (lyso) form of plasmalogen. The polypeptide is Lysoplasmalogenase TMEM86B (Tmem86b) (Rattus norvegicus (Rat)).